The chain runs to 356 residues: tRNA N6-adenosine threonylcarbamoyltransferase (356 aa).

Residues His116 and His120 each contribute to the Fe cation site. Substrate contacts are provided by residues 139 to 143 (IVSGG), Asp174, Gly187, Asp191, and Asn281. Fe cation is bound at residue Asp309.

This sequence belongs to the KAE1 / TsaD family. Fe(2+) is required as a cofactor.

The protein resides in the cytoplasm. It catalyses the reaction L-threonylcarbamoyladenylate + adenosine(37) in tRNA = N(6)-L-threonylcarbamoyladenosine(37) in tRNA + AMP + H(+). Required for the formation of a threonylcarbamoyl group on adenosine at position 37 (t(6)A37) in tRNAs that read codons beginning with adenine. Is involved in the transfer of the threonylcarbamoyl moiety of threonylcarbamoyl-AMP (TC-AMP) to the N6 group of A37, together with TsaE and TsaB. TsaD likely plays a direct catalytic role in this reaction. The chain is tRNA N6-adenosine threonylcarbamoyltransferase from Frankia casuarinae (strain DSM 45818 / CECT 9043 / HFP020203 / CcI3).